A 167-amino-acid polypeptide reads, in one-letter code: Transcription factor 24 (167 aa).

Positions 1–23 are enriched in low complexity; that stretch reads MDRGRPAGSPLSASAEPAPLAAA. The disordered stretch occupies residues 1-60; that stretch reads MDRGRPAGSPLSASAEPAPLAAAIRDSRPGRTGPGPAGPGGGSRSGSGRPAAANAARERS. The segment covering 32-45 has biased composition (gly residues); it reads TGPGPAGPGGGSRS. Low complexity predominate over residues 46–55; it reads GSGRPAAANA. Residues 49–101 form the bHLH domain; the sequence is RPAAANAARERSRVQTLRHAFLELQRTLPSVPPDTKLSKLDVLLLATTYIAHL.

In terms of assembly, efficient DNA binding requires dimerization with another bHLH protein.

It localises to the nucleus. Putative transcription factor. This chain is Transcription factor 24 (TCF24), found in Homo sapiens (Human).